The following is a 1033-amino-acid chain: PDZ domain-containing protein 7 (1033 aa).

2 consecutive PDZ domains span residues 86 to 168 (SVRV…RMGR) and 210 to 293 (IVHL…ETGR). Positions 323 to 344 (ESSSSVSSCASSAPYSSGSLPS) are enriched in low complexity. 4 disordered regions span residues 323–380 (ESSS…GGRV), 444–464 (KQQRKKEKSGSPGEKGALQRS), 754–864 (EPLS…KTVT), and 943–1033 (MELV…PRIP). Positions 770-784 (AQSRSRSRSRSRSRS) are enriched in basic residues. A compositionally biased stretch (low complexity) spans 785–797 (SRGQGKSPGRRSP). The PDZ 3 domain occupies 862 to 934 (TVTLSKMKQS…QRAVDTIRRA (73 aa)). The span at 991 to 1000 (PEPPTNPQTP) shows a compositional bias: pro residues.

Homodimerizes (via PDZ2 domain). Component of USH2 complex, composed of ADGRV1, PDZD7, USH2A and WHRN. Interacts (via PDZ domains) with WHRN; the interaction is direct. Interacts with USH1G. Interacts with ADGRV1 (via the cytoplasmic region). Interacts with USH2A (via the cytoplasmic region). Interacts with MYO7A (via MyTH4-FERM domains). Weakly expressed in the inner ear. Expressed in the retinal pigment epithelium.

The protein localises to the cell projection. It localises to the cilium. Its subcellular location is the nucleus. It is found in the stereocilium. Its function is as follows. In cochlear developing hair cells, essential in organizing the USH2 complex at stereocilia ankle links. Blocks inhibition of adenylate cyclase activity mediated by ADGRV1. This Homo sapiens (Human) protein is PDZ domain-containing protein 7.